Here is a 184-residue protein sequence, read N- to C-terminus: ATP synthase subunit b, chloroplastic (184 aa).

A helical membrane pass occupies residues 27–49 (LATNPINLSVVFGVLIFFGKGVL).

This sequence belongs to the ATPase B chain family. As to quaternary structure, F-type ATPases have 2 components, F(1) - the catalytic core - and F(0) - the membrane proton channel. F(1) has five subunits: alpha(3), beta(3), gamma(1), delta(1), epsilon(1). F(0) has four main subunits: a(1), b(1), b'(1) and c(10-14). The alpha and beta chains form an alternating ring which encloses part of the gamma chain. F(1) is attached to F(0) by a central stalk formed by the gamma and epsilon chains, while a peripheral stalk is formed by the delta, b and b' chains.

The protein localises to the plastid. It is found in the chloroplast thylakoid membrane. Its function is as follows. F(1)F(0) ATP synthase produces ATP from ADP in the presence of a proton or sodium gradient. F-type ATPases consist of two structural domains, F(1) containing the extramembraneous catalytic core and F(0) containing the membrane proton channel, linked together by a central stalk and a peripheral stalk. During catalysis, ATP synthesis in the catalytic domain of F(1) is coupled via a rotary mechanism of the central stalk subunits to proton translocation. Functionally, component of the F(0) channel, it forms part of the peripheral stalk, linking F(1) to F(0). The polypeptide is ATP synthase subunit b, chloroplastic (Nasturtium officinale (Watercress)).